Reading from the N-terminus, the 649-residue chain is Extracellular metalloproteinase 4 (649 aa).

A signal peptide spans 1 to 18 (MHGLLLAGLLALPSNVLG). The propeptide occupies 19–260 (HPAEPPNSVN…VHGVVDYVAS (242 aa)). A Zn(2+)-binding site is contributed by His-443. Residue Glu-444 is part of the active site. His-447 is a binding site for Zn(2+). N-linked (GlcNAc...) asparagine glycans are attached at residues Asn-494 and Asn-609.

The protein belongs to the peptidase M36 family. It depends on Zn(2+) as a cofactor.

It is found in the secreted. Functionally, secreted metalloproteinase probably acting as a virulence factor. This is Extracellular metalloproteinase 4 (MEP4) from Arthroderma otae (strain ATCC MYA-4605 / CBS 113480) (Microsporum canis).